A 498-amino-acid chain; its full sequence is Glycerol kinase (498 aa).

T12 serves as a coordination point for ADP. Residues T12, T13, and S14 each contribute to the ATP site. Residue T12 coordinates sn-glycerol 3-phosphate. R16 contacts ADP. Positions 82, 83, and 134 each coordinate sn-glycerol 3-phosphate. Glycerol-binding residues include R82, E83, and Y134. Position 230 is a phosphohistidine; by HPr (H230). D244 is a binding site for sn-glycerol 3-phosphate. Positions 244 and 245 each coordinate glycerol. T266 and G309 together coordinate ADP. Positions 266, 309, 313, and 410 each coordinate ATP. ADP contacts are provided by G410 and N414.

It belongs to the FGGY kinase family. As to quaternary structure, homotetramer and homodimer (in equilibrium). Post-translationally, the phosphoenolpyruvate-dependent sugar phosphotransferase system (PTS), including enzyme I, and histidine-containing protein (HPr) are required for the phosphorylation, which leads to the activation of the enzyme.

It catalyses the reaction glycerol + ATP = sn-glycerol 3-phosphate + ADP + H(+). It participates in polyol metabolism; glycerol degradation via glycerol kinase pathway; sn-glycerol 3-phosphate from glycerol: step 1/1. Its activity is regulated as follows. Activated by phosphorylation and inhibited by fructose 1,6-bisphosphate (FBP). Its function is as follows. Key enzyme in the regulation of glycerol uptake and metabolism. Catalyzes the phosphorylation of glycerol to yield sn-glycerol 3-phosphate. This chain is Glycerol kinase, found in Staphylococcus aureus (strain Mu50 / ATCC 700699).